The chain runs to 224 residues: Response regulator protein GraR (224 aa).

The Response regulatory domain maps to 2–115 (QILLVEDDNT…VLIAKLQAIY (114 aa)). The residue at position 51 (D51) is a 4-aspartylphosphate. A DNA-binding region (ompR/PhoB-type) is located at residues 126 to 224 (KRTLTWQDAV…KVGKGYMAHE (99 aa)). A phosphothreonine mark is found at T128, T130, and T149.

As to quaternary structure, interacts with GraX. Phosphorylated by GraS. Phosphorylated by Stk1; phosphorylation increases the DNA-binding activity of GraR.

It is found in the cytoplasm. Its function is as follows. Member of the two-component regulatory system GraR/GraS involved in resistance against cationic antimicrobial peptides (CAMPs). Upon phosphorylation by GraS, functions as a transcription regulator by direct binding to promoter regions of target genes such as adhesins, exoproteins, transporters, toxins, and proteins involved in cell wall synthesis. Down-regulates the expression of many genes involved in RNA and amino acid synthesis or glycolysis. In Staphylococcus aureus (strain USA300), this protein is Response regulator protein GraR (graR).